Here is a 246-residue protein sequence, read N- to C-terminus: Probable S-methyl-5'-thioinosine phosphorylase (246 aa).

Residues threonine 10 and 52–53 (RH) contribute to the phosphate site. Methionine 185 serves as a coordination point for substrate. Residue threonine 186 participates in phosphate binding. A substrate-binding site is contributed by 209 to 211 (NPA).

Belongs to the PNP/MTAP phosphorylase family. MTAP subfamily. Homotrimer.

It catalyses the reaction S-methyl-5'-thioinosine + phosphate = 5-(methylsulfanyl)-alpha-D-ribose 1-phosphate + hypoxanthine. Its pathway is purine metabolism; purine nucleoside salvage. Catalyzes the reversible phosphorylation of S-methyl-5'-thioinosine (MTI) to hypoxanthine and 5-methylthioribose-1-phosphate. Involved in the breakdown of S-methyl-5'-thioadenosine (MTA), a major by-product of polyamine biosynthesis. Catabolism of (MTA) occurs via deamination to MTI and phosphorolysis to hypoxanthine. The polypeptide is Probable S-methyl-5'-thioinosine phosphorylase (Pseudomonas syringae pv. tomato (strain ATCC BAA-871 / DC3000)).